A 567-amino-acid chain; its full sequence is Inactive protein kinase SELMODRAFT_444075 (567 aa).

Residues 148–206 are disordered; the sequence is NETRRKGPSPSEVLNSTTSSPASHKPQVLNDFLRMKESREYTEETDTQRNVSRPVDRVS. The span at 159–169 shows a compositional bias: polar residues; it reads EVLNSTTSSPA. Over residues 180–189 the composition is skewed to basic and acidic residues; that stretch reads LRMKESREYT. Residues 196-206 show a composition bias toward low complexity; the sequence is RNVSRPVDRVS. A Protein kinase domain is found at 255 to 487; sequence FSDVNFLAEG…EGDSLSDTSL (233 aa). Residues 261–269 and Lys-283 each bind ATP; that span reads LAEGGYGSV. A compositionally biased stretch (low complexity) spans 511–538; sequence DSSSSRSSSASSVLKSFSRTQHSSRSSS. The interval 511-567 is disordered; sequence DSSSSRSSSASSVLKSFSRTQHSSRSSSNAGSPLNPAATQALAFKKYNKNTTRHTQD. The segment covering 556–567 has biased composition (basic residues); the sequence is KYNKNTTRHTQD.

This chain is Inactive protein kinase SELMODRAFT_444075, found in Selaginella moellendorffii (Spikemoss).